A 161-amino-acid chain; its full sequence is Endoribonuclease YbeY (161 aa).

The Zn(2+) site is built by His-121, His-125, and His-131.

It belongs to the endoribonuclease YbeY family. It depends on Zn(2+) as a cofactor.

It is found in the cytoplasm. Its function is as follows. Single strand-specific metallo-endoribonuclease involved in late-stage 70S ribosome quality control and in maturation of the 3' terminus of the 16S rRNA. The sequence is that of Endoribonuclease YbeY from Bordetella avium (strain 197N).